Consider the following 299-residue polypeptide: Acetaldehyde dehydrogenase (299 aa).

11-14 (SGNI) lines the NAD(+) pocket. Residue cysteine 126 is the Acyl-thioester intermediate of the active site. NAD(+) is bound by residues 157-165 (SAGPGTRAN) and asparagine 267.

Belongs to the acetaldehyde dehydrogenase family.

The enzyme catalyses acetaldehyde + NAD(+) + CoA = acetyl-CoA + NADH + H(+). This is Acetaldehyde dehydrogenase from Bacillus thuringiensis (strain Al Hakam).